The chain runs to 425 residues: MTAILENLAAARRAGKPAGITSVCSAHPVVLRAAIRRAAASQTAVLIEATCNQVNHLGGYTGMTPRDFVAFVNSIAAEEGLPAELLIFGGDHLGPNPWRREKAEDALTKAAAMVDAYVTAGFRKIHLDASMGCAGEPAALDDVTIAHRAAKLTAVAEKAATEAGLPKPLYILGTEVPVPGGADHVLETVAPTEPQAARNTIDLHREIFAQHGLSDAFERVIAFVVQPGVEFGSDNVVAYDPQAAQSLSAVLDGEPRLVFEAHSTDYQTEPALAALVRDGYPILKVGPGLTFAYREALYALDMIASEMVGTYGDRPLARTMEKLMLSAPGDWQGHYHGDDITLRLQRHYSYSDRIRYYWTRPEALAAVSTLHKALDGKTIPETLLRQYLGELPLAAVAGKEPEEVLVAAVDQVLATYHAATGEGRH.

The protein belongs to the GatZ/KbaZ family.

It catalyses the reaction keto-D-tagatose 6-phosphate = keto-D-fructose 6-phosphate. The protein operates within carbohydrate metabolism. Involved in galactitol and D-altritol catabolism. Catalyzes the epimerization of D-tagatose 6-phosphate to D-fructose 6-phosphate. This Agrobacterium fabrum (strain C58 / ATCC 33970) (Agrobacterium tumefaciens (strain C58)) protein is D-tagatose 6-phosphate 4-epimerase.